The chain runs to 37 residues: Large ribosomal subunit protein bL36 (37 aa).

It belongs to the bacterial ribosomal protein bL36 family.

The sequence is that of Large ribosomal subunit protein bL36 from Synechococcus sp. (strain WH7803).